The primary structure comprises 84 residues: Small ribosomal subunit protein uS17 (84 aa).

This sequence belongs to the universal ribosomal protein uS17 family. Part of the 30S ribosomal subunit.

In terms of biological role, one of the primary rRNA binding proteins, it binds specifically to the 5'-end of 16S ribosomal RNA. This chain is Small ribosomal subunit protein uS17, found in Clostridium beijerinckii (strain ATCC 51743 / NCIMB 8052) (Clostridium acetobutylicum).